Here is a 452-residue protein sequence, read N- to C-terminus: Neuronal acetylcholine receptor subunit alpha-5 (452 aa).

Residues 1–27 (MVQLLAGRWRPTGARRGTRGGLPELSS) form the signal peptide. The Extracellular segment spans residues 28 to 239 (AAKHEDSLFR…VIKRLPLFYT (212 aa)). N-linked (GlcNAc...) asparagine glycosylation is found at asparagine 140, asparagine 168, and asparagine 214. Cysteine 155 and cysteine 169 are disulfide-bonded. Cysteine 219 and cysteine 220 are joined by a disulfide. Helical transmembrane passes span 240-260 (LFLIIPCIGLSFLTVVVFYLP), 269-289 (LCTSVLVSLTVFLLVIEEIIP), and 302-322 (LVFTMIFVTLSIMVTVFAINI). Residues 323–414 (HHRSSSTHNA…KFIAQVLDRM (92 aa)) lie on the Cytoplasmic side of the membrane. A helical transmembrane segment spans residues 415-435 (FLWTFLLVSIIGTLGLFVPVI). Topologically, residues 436–452 (YKWANIIVPVHIGNTIK) are extracellular.

It belongs to the ligand-gated ion channel (TC 1.A.9) family. Acetylcholine receptor (TC 1.A.9.1) subfamily. Alpha-5/CHRNA5 sub-subfamily. In terms of assembly, neuronal AChR that forms heteropentamers composed of two different type of subunits: alpha and non-alpha (beta). CHRNA5/alpha-5 subunit is only able to form functional nAChRs when co-assembled with another alpha subunit, can be combined to CHRNA4/alpha-4 or CHRNA3/alpha-3 and CHRNB4/beta-4 or CHRNB2/beta-2 to give rise to functional receptors. Interacts with LYPD6.

The protein resides in the synaptic cell membrane. It is found in the cell membrane. It carries out the reaction Ca(2+)(in) = Ca(2+)(out). The catalysed reaction is K(+)(in) = K(+)(out). The enzyme catalyses Na(+)(in) = Na(+)(out). Activated by a myriad of ligands such as acetylcholine, cytisine, nicotine, choline and epibatidine. Functionally, component of neuronal acetylcholine receptors (nAChRs) that function as pentameric, ligand-gated cation channels with high calcium permeability among other activities. nAChRs are excitatory neurotrasnmitter receptors formed by a collection of nAChR subunits known to mediate synaptic transmission in the nervous system and the neuromuscular junction. Each nAchR subunit confers differential attributes to channel properties, including activation, deactivation and desensitization kinetics, pH sensitivity, cation permeability, and binding to allosteric modulators. Has an accessory rather than functional role and is only able to form functional nAChRs when co-assembled with another beta subunit. Participates in pentameric assemblies along with CHRNA3, CHRNA4, CHRNB2 and CHRNB4. Increases receptor sensitivity to acetylcholine and nicotine when associated with CHRNA4 and CHRNB2. Plays a role in nicotine addiction. In Rattus norvegicus (Rat), this protein is Neuronal acetylcholine receptor subunit alpha-5 (Chrna5).